The primary structure comprises 196 residues: 3-isopropylmalate dehydratase small subunit (196 aa).

Belongs to the LeuD family. LeuD type 1 subfamily. As to quaternary structure, heterodimer of LeuC and LeuD.

The enzyme catalyses (2R,3S)-3-isopropylmalate = (2S)-2-isopropylmalate. Its pathway is amino-acid biosynthesis; L-leucine biosynthesis; L-leucine from 3-methyl-2-oxobutanoate: step 2/4. Catalyzes the isomerization between 2-isopropylmalate and 3-isopropylmalate, via the formation of 2-isopropylmaleate. In Herpetosiphon aurantiacus (strain ATCC 23779 / DSM 785 / 114-95), this protein is 3-isopropylmalate dehydratase small subunit.